The following is a 316-amino-acid chain: Ribosomal RNA small subunit methyltransferase H (316 aa).

Residues 35-37 (SGH), aspartate 55, phenylalanine 84, aspartate 105, and glutamine 112 each bind S-adenosyl-L-methionine.

It belongs to the methyltransferase superfamily. RsmH family.

It localises to the cytoplasm. It catalyses the reaction cytidine(1402) in 16S rRNA + S-adenosyl-L-methionine = N(4)-methylcytidine(1402) in 16S rRNA + S-adenosyl-L-homocysteine + H(+). Its function is as follows. Specifically methylates the N4 position of cytidine in position 1402 (C1402) of 16S rRNA. The protein is Ribosomal RNA small subunit methyltransferase H of Streptococcus pyogenes serotype M18 (strain MGAS8232).